Here is a 467-residue protein sequence, read N- to C-terminus: Indoleacetamide hydrolase (467 aa).

Active-site charge relay system residues include lysine 74 and serine 149. Serine 173 functions as the Acyl-ester intermediate in the catalytic mechanism.

The protein belongs to the amidase family.

Its pathway is plant hormone metabolism; auxin biosynthesis. In terms of biological role, hydrolyzes indole-3-acetamide (IAM) into indole-3-acetic acid (IAA). The chain is Indoleacetamide hydrolase (TA-iaaH) from Agrobacterium vitis (Rhizobium vitis).